The following is a 55-amino-acid chain: Large ribosomal subunit protein bL33B (55 aa).

It belongs to the bacterial ribosomal protein bL33 family.

The protein is Large ribosomal subunit protein bL33B of Salinispora tropica (strain ATCC BAA-916 / DSM 44818 / JCM 13857 / NBRC 105044 / CNB-440).